Consider the following 89-residue polypeptide: cAMP-regulated phosphoprotein 21 (89 aa).

The interval 1–89 (MSEQGDLNQA…GGESLQDQTL (89 aa)) is disordered. At serine 2 the chain carries N-acetylserine. Over residues 9-25 (QAIAEEGGTEQETATPE) the composition is skewed to low complexity. Serine 33 is modified (phosphoserine). Residues 40–53 (LELQRRLEAQNQER) are compositionally biased toward basic and acidic residues. Serine 56 is subject to Phosphoserine.

In terms of assembly, interacts with CALM1. In terms of processing, phosphorylation at Ser-56 favors interaction with CALM1.

It is found in the cytoplasm. May act as a competitive inhibitor of calmodulin-dependent enzymes such as calcineurin in neurons. This chain is cAMP-regulated phosphoprotein 21 (ARPP21), found in Pongo abelii (Sumatran orangutan).